Reading from the N-terminus, the 982-residue chain is Serine/threonine-protein kinase ATG1 (982 aa).

The Protein kinase domain maps to 19 to 324 (FVIGAEIGKG…FENFFAHPVI (306 aa)). ATP is bound by residues 25-33 (IGKGSFAQV) and K48. Residue D162 is the Proton acceptor of the active site. Disordered regions lie at residues 334 to 506 (DDIP…REKA), 813 to 834 (RLPD…SVNG), 898 to 918 (PKRR…DGHA), and 947 to 982 (RMIS…SYSS). Composition is skewed to basic and acidic residues over residues 335–359 (DIPK…KSDD) and 372–387 (HPTD…RRVE). Residues 388-398 (PPSSAAESAPS) show a composition bias toward low complexity. Over residues 463 to 481 (SNASLNRSNRESSSPTSAA) the composition is skewed to polar residues.

Belongs to the protein kinase superfamily. Ser/Thr protein kinase family. APG1/unc-51/ULK1 subfamily. In terms of assembly, homodimer. Forms a ternary complex with ATG13 and ATG17. Uniformly detected in conidia, mycelia and appressoria (at protein level).

Its subcellular location is the cytoplasm. It is found in the preautophagosomal structure membrane. It carries out the reaction L-seryl-[protein] + ATP = O-phospho-L-seryl-[protein] + ADP + H(+). It catalyses the reaction L-threonyl-[protein] + ATP = O-phospho-L-threonyl-[protein] + ADP + H(+). Serine/threonine protein kinase involved in the cytoplasm to vacuole transport (Cvt) and found to be essential in autophagy, where it is required for the formation of autophagosomes. Involved in the clearance of protein aggregates which cannot be efficiently cleared by the proteasome. Required for selective autophagic degradation of the nucleus (nucleophagy) as well as for mitophagy which contributes to regulate mitochondrial quantity and quality by eliminating the mitochondria to a basal level to fulfill cellular energy requirements and preventing excess ROS production. Also involved in endoplasmic reticulum-specific autophagic process, in selective removal of ER-associated degradation (ERAD) substrates. Plays a key role in ATG9 and ATG23 cycling through the pre-autophagosomal structure and is necessary to promote ATG18 binding to ATG9 through phosphorylation of ATG9. Catalyzes phosphorylation of ATG4, decreasing the interaction between ATG4 and ATG8 and impairing deconjugation of PE-conjugated forms of ATG8. Autophagy is essential to fungal development, production of appressorium turgor, and pathogenicity in rice blast disease. The protein is Serine/threonine-protein kinase ATG1 of Pyricularia oryzae (strain 70-15 / ATCC MYA-4617 / FGSC 8958) (Rice blast fungus).